A 61-amino-acid polypeptide reads, in one-letter code: Small ribosomal subunit protein uS14B (61 aa).

Positions 24, 27, 40, and 43 each coordinate Zn(2+).

It belongs to the universal ribosomal protein uS14 family. Zinc-binding uS14 subfamily. As to quaternary structure, part of the 30S ribosomal subunit. Contacts proteins S3 and S10. Requires Zn(2+) as cofactor.

Functionally, binds 16S rRNA, required for the assembly of 30S particles and may also be responsible for determining the conformation of the 16S rRNA at the A site. The polypeptide is Small ribosomal subunit protein uS14B (Shouchella clausii (strain KSM-K16) (Alkalihalobacillus clausii)).